Consider the following 114-residue polypeptide: NADH dehydrogenase [ubiquinone] 1 subunit C2, isoform 2 (114 aa).

The chain crosses the membrane as a helical span at residues 56-75; the sequence is GLHRQLLYITAFFFAGYYLV.

This sequence belongs to the complex I NDUFC2 subunit family. Complex I is composed of 45 different subunits.

It is found in the mitochondrion inner membrane. Functionally, accessory subunit of the mitochondrial membrane respiratory chain NADH dehydrogenase (Complex I), that is believed not to be involved in catalysis. Complex I functions in the transfer of electrons from NADH to the respiratory chain. The immediate electron acceptor for the enzyme is believed to be ubiquinone. In Homo sapiens (Human), this protein is NADH dehydrogenase [ubiquinone] 1 subunit C2, isoform 2 (NDUFC2-KCTD14).